We begin with the raw amino-acid sequence, 591 residues long: Aspartate--tRNA(Asp/Asn) ligase (591 aa).

Glu174 is an L-aspartate binding site. The interval 198-201 (QLFK) is aspartate. Arg220 contacts L-aspartate. ATP contacts are provided by residues 220-222 (RDE) and Gln229. Position 450 (His450) interacts with L-aspartate. Glu483 contributes to the ATP binding site. Arg490 contributes to the L-aspartate binding site. Residue 535–538 (GLDR) coordinates ATP.

It belongs to the class-II aminoacyl-tRNA synthetase family. Type 1 subfamily. As to quaternary structure, homodimer.

The protein localises to the cytoplasm. The enzyme catalyses tRNA(Asx) + L-aspartate + ATP = L-aspartyl-tRNA(Asx) + AMP + diphosphate. In terms of biological role, aspartyl-tRNA synthetase with relaxed tRNA specificity since it is able to aspartylate not only its cognate tRNA(Asp) but also tRNA(Asn). Reaction proceeds in two steps: L-aspartate is first activated by ATP to form Asp-AMP and then transferred to the acceptor end of tRNA(Asp/Asn). The chain is Aspartate--tRNA(Asp/Asn) ligase from Pseudomonas fluorescens (strain ATCC BAA-477 / NRRL B-23932 / Pf-5).